Reading from the N-terminus, the 185-residue chain is dTDP-4-dehydrorhamnose 3,5-epimerase (185 aa).

Residues arginine 23, glutamate 28, 47 to 49 (QDN), and arginine 59 each bind substrate. Catalysis depends on histidine 62, which acts as the Proton acceptor. Lysine 72 and histidine 119 together coordinate substrate. Catalysis depends on tyrosine 132, which acts as the Proton donor. Residues aspartate 143 and lysine 168 each coordinate substrate.

This sequence belongs to the dTDP-4-dehydrorhamnose 3,5-epimerase family. In terms of assembly, homodimer.

It carries out the reaction dTDP-4-dehydro-6-deoxy-alpha-D-glucose = dTDP-4-dehydro-beta-L-rhamnose. Its pathway is carbohydrate biosynthesis; dTDP-L-rhamnose biosynthesis. The protein operates within bacterial outer membrane biogenesis; LPS O-antigen biosynthesis. Its function is as follows. Catalyzes the epimerization of the C3' and C5'positions of dTDP-6-deoxy-D-xylo-4-hexulose, forming dTDP-6-deoxy-L-lyxo-4-hexulose. The polypeptide is dTDP-4-dehydrorhamnose 3,5-epimerase (rfbC) (Escherichia coli (strain K12)).